The following is a 447-amino-acid chain: Phosphoglucosamine mutase (447 aa).

Catalysis depends on Ser-103, which acts as the Phosphoserine intermediate. Mg(2+) is bound by residues Ser-103, Asp-242, Asp-244, and Asp-246. Ser-103 is modified (phosphoserine).

It belongs to the phosphohexose mutase family. Mg(2+) serves as cofactor. Post-translationally, activated by phosphorylation.

It catalyses the reaction alpha-D-glucosamine 1-phosphate = D-glucosamine 6-phosphate. Its function is as follows. Catalyzes the conversion of glucosamine-6-phosphate to glucosamine-1-phosphate. The chain is Phosphoglucosamine mutase from Dinoroseobacter shibae (strain DSM 16493 / NCIMB 14021 / DFL 12).